A 199-amino-acid polypeptide reads, in one-letter code: IMP cyclohydrolase (199 aa).

The protein belongs to the archaeal IMP cyclohydrolase family.

It carries out the reaction IMP + H2O = 5-formamido-1-(5-phospho-D-ribosyl)imidazole-4-carboxamide. It functions in the pathway purine metabolism; IMP biosynthesis via de novo pathway; IMP from 5-formamido-1-(5-phospho-D-ribosyl)imidazole-4-carboxamide: step 1/1. Its function is as follows. Catalyzes the cyclization of 5-formylamidoimidazole-4-carboxamide ribonucleotide to IMP. The polypeptide is IMP cyclohydrolase (Methanothrix thermoacetophila (strain DSM 6194 / JCM 14653 / NBRC 101360 / PT) (Methanosaeta thermophila)).